The sequence spans 558 residues: Solute carrier family 22 member 6-A (558 aa).

Topologically, residues 1-15 (MSFAELLERTGGMGR) are cytoplasmic. The helical transmembrane segment at 16–36 (FQITQVALMCFPILLMASHNL) threads the bilayer. The Extracellular segment spans residues 37 to 140 (LQNFSAAIPD…LVCGHKNRRQ (104 aa)). Residues 141 to 161 (LAQSVYMGGVLVGAIILGGLS) traverse the membrane as a helical segment. At 162–167 (DRYGRR) the chain is on the cytoplasmic side. Residues 168 to 188 (ALLIWSYFQMAVSGLCSAFSP) form a helical membrane-spanning segment. Residues 189–197 (NYLSYCIFR) lie on the Extracellular side of the membrane. A helical membrane pass occupies residues 198-218 (FLTGMALSGIGLNTTALIVEW). Over 219–225 (VPTRVRT) the chain is Cytoplasmic. The chain crosses the membrane as a helical span at residues 226–246 (ITGTLAGFSYTVGQLLLAGLA). Over 247–253 (YAMRDWR) the chain is Extracellular. The chain crosses the membrane as a helical span at residues 254-274 (WLQLCVSLPFFIFFLYSWWFP). Topologically, residues 275 to 342 (ESARWLVLSG…DLIRTSTIRR (68 aa)) are cytoplasmic. The chain crosses the membrane as a helical span at residues 343 to 363 (ISCALSLVWFSTSFAYYGLAM). The Extracellular segment spans residues 364–369 (DLQNFN). A helical membrane pass occupies residues 370-390 (VSIYLIQVIFGAVDFPAKIFS). Over 391 to 400 (TTAMIYVGRK) the chain is Cytoplasmic. The helical transmembrane segment at 401–421 (FTQLMSLILGGVVILANSFVP) threads the bilayer. At 422-428 (HEMQTVR) the chain is on the extracellular side. Residues 429-449 (TGMAVFGKGCLAASFSCVFLY) traverse the membrane as a helical segment. At 450 to 462 (TTELYPTVIRQSG) the chain is on the cytoplasmic side. Residues 463-483 (LGLCSTMARIGGIVAPLVKIL) form a helical membrane-spanning segment. Topologically, residues 484–488 (GEYYP) are extracellular. Residues 489 to 509 (FLPLVIYGGAPIISGLCVFFL) traverse the membrane as a helical segment. Topologically, residues 510–558 (PETVNKPLPDTIEEVEKRIKAPKKENEMNEIVSLKKKEGMKENPVNDVL) are cytoplasmic. Basic and acidic residues predominate over residues 539-550 (EIVSLKKKEGMK). Residues 539-558 (EIVSLKKKEGMKENPVNDVL) are disordered.

It belongs to the major facilitator (TC 2.A.1) superfamily. Organic cation transporter (TC 2.A.1.19) family. Glycosylated. Glycosylation is necessary for proper targeting of the transporter to the plasma membrane.

The protein resides in the cell membrane. It is found in the basolateral cell membrane. The protein localises to the basal cell membrane. Functionally, involved in the renal elimination of endogenous and exogenous organic anions. Mediates the sodium-independent uptake of p-aminohippurate (PAH), 2,3-dimercapto-1-propanesulfonic acid (DMPS), cidofovir, adefovir, 9-(2-phosphonylmethoxyethyl) guanine (PMEG), 9-(2-phosphonylmethoxyethyl) diaminopurine (PMEDAP), ochratoxin (OTA), acyclovir (ACV), 3'-azido-3-'deoxythymidine (AZT), cimetidine (CMD), 2,4-dichloro-phenoxyacetate (2,4-D), hippurate (HA), indoleacetate (IA), indoxyl sulfate (IS) and 3-carboxy-4-methyl-5-propyl-2-furanpropionate (CMPF) and edaravone sulfate. PAH uptake is inhibited by p-chloromercuribenzenesulphonate (PCMBS), diethyl pyrocarbonate (DEPC), indomethacin, sulindac, diclofenac, carprofen, okadaic acid, benzothiazolylcysteine (BTC), S-chlorotrifluoroethylcysteine (CTFC), cysteine S-conjugates S-dichlorovinylcysteine (DCVC), furosemide, steviol, phorbol 12-myristate 13-acetate (PMA), calcium ionophore A23187, benzylpenicillin, bumetamide, losartan, probenecid, phenol red, urate, glutarate and alpha-ketoglutarate. The protein is Solute carrier family 22 member 6-A (slc22a6-a) of Xenopus laevis (African clawed frog).